The sequence spans 256 residues: Ferritin-3, chloroplastic (256 aa).

The transit peptide at 1–54 (MALSCSKVLTFSLSSVVGGDDAKKKLSLCSSSSLSASVNGGGSRNMRVCAAASN) directs the protein to the chloroplast. The extension peptide (EP) stretch occupies residues 55 to 87 (APAPLTGVIFEPFQELKKDYLAVPIAPNVSLSR). The region spanning 88 to 241 (QNYSDEAEAA…EYVTQLRLVG (154 aa)) is the Ferritin-like diiron domain. Fe cation-binding residues include glutamate 105, glutamate 140, histidine 143, glutamate 189, and glutamine 223.

This sequence belongs to the ferritin family. As to quaternary structure, oligomer of 24 subunits. There are two types of subunits: L (light) chain and H (heavy) chain. The major chain can be light or heavy, depending on the species and tissue type. The functional molecule forms a roughly spherical shell with a diameter of 12 nm and contains a central cavity into which the insoluble mineral iron core is deposited.

It is found in the plastid. Its subcellular location is the chloroplast. The enzyme catalyses 4 Fe(2+) + O2 + 4 H(+) = 4 Fe(3+) + 2 H2O. Stores iron in a soluble, non-toxic, readily available form. Important for iron homeostasis. Has ferroxidase activity. Iron is taken up in the ferrous form and deposited as ferric hydroxides after oxidation. This is Ferritin-3, chloroplastic from Vigna unguiculata (Cowpea).